The primary structure comprises 439 residues: Leukocyte immunoglobulin-like receptor subfamily A member 3 (439 aa).

The first 23 residues, 1-23, serve as a signal peptide directing secretion; the sequence is MTPILTVLICLGLSLDPRTHVQA. 4 consecutive Ig-like C2-type domains span residues 27–108, 119–224, 226–315, and 326–415; these read PKPT…AGLS, TGAY…GVSK, PSLS…DPLD, and PFLS…SDPL. An intrachain disulfide couples C49 to C98. Residue N140 is glycosylated (N-linked (GlcNAc...) asparagine). Cystine bridges form between C145/C197, C157/C167, and C246/C297. Residues N281, N302, and N341 are each glycosylated (N-linked (GlcNAc...) asparagine). A disulfide bond links C346 and C397. N431 is a glycosylation site (N-linked (GlcNAc...) asparagine).

In terms of processing, N-glycosylation is required for ligand binding. As to expression, detected in B-cells, and at lower levels in natural killer (NK) cells. Detected in peripheral blood monocytes and lung.

The protein localises to the secreted. Acts as a soluble receptor for class I MHC antigens. Binds both classical and non-classical HLA class I molecules but with reduced affinities compared to LILRB1 or LILRB2. Binds with high affinity to the surface of monocytes, leading to abolish LPS-induced TNF-alpha production by monocytes. This is Leukocyte immunoglobulin-like receptor subfamily A member 3 (LILRA3) from Homo sapiens (Human).